Reading from the N-terminus, the 447-residue chain is Phosphoglucosamine mutase (447 aa).

The active-site Phosphoserine intermediate is the Ser88. Ser88, Asp231, Asp233, and Asp235 together coordinate Mg(2+). Ser88 carries the phosphoserine modification.

This sequence belongs to the phosphohexose mutase family. The cofactor is Mg(2+). Activated by phosphorylation.

It catalyses the reaction alpha-D-glucosamine 1-phosphate = D-glucosamine 6-phosphate. Functionally, catalyzes the conversion of glucosamine-6-phosphate to glucosamine-1-phosphate. This Methanococcus maripaludis (strain C7 / ATCC BAA-1331) protein is Phosphoglucosamine mutase.